A 73-amino-acid polypeptide reads, in one-letter code: Large ribosomal subunit protein bL31 (73 aa).

Zn(2+) is bound by residues cysteine 16, cysteine 18, cysteine 37, and cysteine 40.

It belongs to the bacterial ribosomal protein bL31 family. Type A subfamily. Part of the 50S ribosomal subunit. It depends on Zn(2+) as a cofactor.

In terms of biological role, binds the 23S rRNA. This chain is Large ribosomal subunit protein bL31, found in Pseudomonas savastanoi pv. phaseolicola (strain 1448A / Race 6) (Pseudomonas syringae pv. phaseolicola (strain 1448A / Race 6)).